Here is a 332-residue protein sequence, read N- to C-terminus: Ketol-acid reductoisomerase (NADP(+)) (332 aa).

One can recognise a KARI N-terminal Rossmann domain in the interval 2 to 182 (AKIYHDLEVS…GATRAGVLET (181 aa)). Residues 25-28 (YGSQ), arginine 48, serine 53, and 83-86 (DTEQ) contribute to the NADP(+) site. Histidine 108 is an active-site residue. Residue glycine 134 participates in NADP(+) binding. Residues 183-328 (TFKEETETDL…KVIREMMPWL (146 aa)) enclose the KARI C-terminal knotted domain. Mg(2+) is bound by residues aspartate 191, glutamate 195, glutamate 227, and glutamate 231. A substrate-binding site is contributed by serine 252.

It belongs to the ketol-acid reductoisomerase family. It depends on Mg(2+) as a cofactor.

It carries out the reaction (2R)-2,3-dihydroxy-3-methylbutanoate + NADP(+) = (2S)-2-acetolactate + NADPH + H(+). It catalyses the reaction (2R,3R)-2,3-dihydroxy-3-methylpentanoate + NADP(+) = (S)-2-ethyl-2-hydroxy-3-oxobutanoate + NADPH + H(+). Its pathway is amino-acid biosynthesis; L-isoleucine biosynthesis; L-isoleucine from 2-oxobutanoate: step 2/4. It participates in amino-acid biosynthesis; L-valine biosynthesis; L-valine from pyruvate: step 2/4. Involved in the biosynthesis of branched-chain amino acids (BCAA). Catalyzes an alkyl-migration followed by a ketol-acid reduction of (S)-2-acetolactate (S2AL) to yield (R)-2,3-dihydroxy-isovalerate. In the isomerase reaction, S2AL is rearranged via a Mg-dependent methyl migration to produce 3-hydroxy-3-methyl-2-ketobutyrate (HMKB). In the reductase reaction, this 2-ketoacid undergoes a metal-dependent reduction by NADPH to yield (R)-2,3-dihydroxy-isovalerate. The protein is Ketol-acid reductoisomerase (NADP(+)) of Dictyoglomus thermophilum (strain ATCC 35947 / DSM 3960 / H-6-12).